A 72-amino-acid polypeptide reads, in one-letter code: Heat shock factor-binding protein 1-like protein 1 (72 aa).

Residues 12-66 (DLLQNAAENLLQEVEEHFQALTATLNLRMEEMGNRIEDLQRNVDDLMAQAGIENS) adopt a coiled-coil conformation.

It belongs to the HSBP1 family.

This is Heat shock factor-binding protein 1-like protein 1 (Hsbp1l1) from Rattus norvegicus (Rat).